A 132-amino-acid chain; its full sequence is Large-conductance mechanosensitive channel (132 aa).

The next 3 membrane-spanning stretches (helical) occupy residues 8-28 (FALK…GAFG), 30-50 (IVSS…LGGV), and 67-87 (GAFI…FLFI).

Belongs to the MscL family. Homopentamer.

Its subcellular location is the cell membrane. Channel that opens in response to stretch forces in the membrane lipid bilayer. May participate in the regulation of osmotic pressure changes within the cell. The protein is Large-conductance mechanosensitive channel of Bacillus cytotoxicus (strain DSM 22905 / CIP 110041 / 391-98 / NVH 391-98).